The chain runs to 340 residues: Uroporphyrinogen decarboxylase (340 aa).

Residues 23 to 27 (RQAGR), Asp72, Tyr147, Thr202, and His316 each bind substrate.

This sequence belongs to the uroporphyrinogen decarboxylase family. Homodimer.

It localises to the cytoplasm. It catalyses the reaction uroporphyrinogen III + 4 H(+) = coproporphyrinogen III + 4 CO2. It participates in porphyrin-containing compound metabolism; protoporphyrin-IX biosynthesis; coproporphyrinogen-III from 5-aminolevulinate: step 4/4. Catalyzes the decarboxylation of four acetate groups of uroporphyrinogen-III to yield coproporphyrinogen-III. In Geobacter sulfurreducens (strain ATCC 51573 / DSM 12127 / PCA), this protein is Uroporphyrinogen decarboxylase.